The following is a 563-amino-acid chain: Putative cysteine ligase BshC (563 aa).

The protein belongs to the BshC family.

The sequence is that of Putative cysteine ligase BshC from Chlorobium phaeobacteroides (strain BS1).